A 313-amino-acid polypeptide reads, in one-letter code: Transcription factor MafB (313 aa).

Disordered regions lie at residues glutamine 51–threonine 77 and methionine 151–arginine 197. Residues serine 55–proline 76 show a composition bias toward low complexity. Over residues proline 154 to histidine 166 the composition is skewed to basic residues. Residues glutamine 167 to serine 192 are compositionally biased toward low complexity. The basic motif stretch occupies residues arginine 225–lysine 250. Residues arginine 225–leucine 288 enclose the bZIP domain. The interval leucine 253–leucine 274 is leucine-zipper. The segment at asparagine 292–methionine 313 is disordered.

It belongs to the bZIP family. Maf subfamily. In terms of assembly, homodimer or heterodimer with other bHLH-Zip transcription factors. Binds DNA as a homodimer or a heterodimer.

The protein resides in the nucleus. Functionally, acts as a transcriptional activator or repressor. Implicated in the regulation of cell-type specific gene expression and play a role in inductive events during lens development. In Xenopus laevis (African clawed frog), this protein is Transcription factor MafB (mafb).